Consider the following 591-residue polypeptide: Complement component C8 beta chain (591 aa).

The N-terminal stretch at 1–32 (MKNSRTWAWRAPVELFLLCAALGCLSLPGSRG) is a signal peptide. Positions 33–54 (ERPHSFGSNAVNKSFAKSRQMR) are excised as a propeptide. A TSP type-1 1 domain is found at 64-117 (DCELSSWSSWTTCDPCQKKRYRYAYLLQPSQFHGEPCNFSDKEVEDCVTNRPCG). 7 disulfides stabilise this stretch: Cys65-Cys100, Cys76-Cys110, Cys79-Cys116, Cys122-Cys133, Cys127-Cys146, Cys140-Cys155, and Cys162-Cys200. C-linked (Man) tryptophan glycosylation is found at Trp70 and Trp73. Asn101 carries an N-linked (GlcNAc...) asparagine glycan. The LDL-receptor class A domain occupies 120–157 (VRCEGFVCAQTGRCVNRRLLCNGDNDCGDQSDEANCRR). Residues Leu138, Asn141, Asp143, Asp145, Asp151, and Glu152 each contribute to the Ca(2+) site. Residues 158 to 504 (IYKKCQHEMD…EFQKEVSSCH (347 aa)) form the MACPF domain. Asn243 is a glycosylation site (N-linked (GlcNAc...) asparagine). The next 4 beta stranded transmembrane spans lie at 252 to 259 (SGFSFGFK), 262 to 269 (GIFELGIS), 379 to 386 (AKNDFKIG), and 392 to 399 (VYVSLGVS). Cys378 and Cys403 form a disulfide bridge. Phosphothreonine is present on Thr418. Disulfide bonds link Cys503–Cys550, Cys505–Cys521, Cys508–Cys523, and Cys525–Cys534. The EGF-like domain occupies 505 to 535 (CAPCQGNGVPVLKGSRCDCICPVGSQGLACE). The TSP type-1 2 domain maps to 545 to 591 (DGKWNCWSNWSSCSGRRKTRQRQCNNPPPQNGGSPCSGPASETLDCS). C-linked (Man) tryptophan glycans are attached at residues Trp551 and Trp554. A disulfide bridge links Cys557 with Cys590. The disordered stretch occupies residues 568–591 (CNNPPPQNGGSPCSGPASETLDCS).

It belongs to the complement C6/C7/C8/C9 family. Heterotrimer of 3 chains: alpha (C8A), beta (C8B) and gamma (C8G); the alpha and gamma chains are disulfide bonded. Component of the membrane attack complex (MAC), composed of complement C5b, C6, C7, C8A, C8B, C8G and multiple copies of the pore-forming subunit C9. Post-translationally, N-glycosylated; contains one or two bound glycans. Not O-glycosylated.

The protein localises to the secreted. It is found in the target cell membrane. Its activity is regulated as follows. Membrane attack complex (MAC) assembly is inhibited by CD59, thereby protecting self-cells from damage during complement activation. CD59 acts by binding to the beta-haipins of C8 (C8A and C8B), forming an intermolecular beta-sheet that prevents incorporation of the multiple copies of C9 required for complete formation of the osmolytic pore. MAC assembly is also inhibited by clusterin (CLU) chaperones that inhibit polymerization of C9. In terms of biological role, component of the membrane attack complex (MAC), a multiprotein complex activated by the complement cascade, which inserts into a target cell membrane and forms a pore, leading to target cell membrane rupture and cell lysis. The MAC is initiated by proteolytic cleavage of C5 into complement C5b in response to the classical, alternative, lectin and GZMK complement pathways. The complement pathways consist in a cascade of proteins that leads to phagocytosis and breakdown of pathogens and signaling that strengthens the adaptive immune system. C8B, together with C8A and C8G, inserts into the target membrane, but does not form pores by itself. During MAC assembly, associates with C5b, C6 and C7 to form the C5b8 intermediate complex that inserts into the target membrane and traverses the bilayer increasing membrane rigidity. In Homo sapiens (Human), this protein is Complement component C8 beta chain.